We begin with the raw amino-acid sequence, 364 residues long: 3-isopropylmalate dehydrogenase (364 aa).

79–92 contacts NAD(+); sequence GPKWNNINETSRPE. The substrate site is built by Arg100, Arg110, Arg139, and Asp228. Mg(2+)-binding residues include Asp228, Asp252, and Asp256. 286 to 298 contributes to the NAD(+) binding site; it reads GSAPDIAGKNIAN.

Belongs to the isocitrate and isopropylmalate dehydrogenases family. LeuB type 1 subfamily. In terms of assembly, homodimer. Mg(2+) serves as cofactor. Requires Mn(2+) as cofactor.

Its subcellular location is the cytoplasm. The catalysed reaction is (2R,3S)-3-isopropylmalate + NAD(+) = 4-methyl-2-oxopentanoate + CO2 + NADH. Its pathway is amino-acid biosynthesis; L-leucine biosynthesis; L-leucine from 3-methyl-2-oxobutanoate: step 3/4. In terms of biological role, catalyzes the oxidation of 3-carboxy-2-hydroxy-4-methylpentanoate (3-isopropylmalate) to 3-carboxy-4-methyl-2-oxopentanoate. The product decarboxylates to 4-methyl-2 oxopentanoate. This is 3-isopropylmalate dehydrogenase from Blochmanniella floridana.